Reading from the N-terminus, the 458-residue chain is Vitamin K-dependent protein C (458 aa).

A signal peptide spans 1 to 27 (IPDDVGYRNQKTASKEGVCVVSKCQDG). A propeptide spanning residues 28 to 36 (PNTLPRAKR) is cleaved from the precursor. Residues 37 to 82 (ANSFLEELRPSSLERECVEEVCDLEEAKEIFQSVDDTLAFWYKYVD) form the Gla domain. 4-carboxyglutamate occurs at positions 42, 43, 50, 52, 55, 56, 61, 62, and 65. A disulfide bridge links Cys-53 with Cys-58. Intrachain disulfides connect Cys-86-Cys-105, Cys-95-Cys-100, Cys-99-Cys-114, and Cys-116-Cys-125. EGF-like domains lie at 91–126 (SEHPCSSQCCGHGTCADSIGGFSCQCHGGWEGSFCQ) and 130–170 (RFSN…LQCE). Asp-107 is subject to (3R)-3-hydroxyaspartate. An N-linked (GlcNAc...) asparagine glycan is attached at Asn-133. 5 disulfides stabilise this stretch: Cys-134-Cys-145, Cys-141-Cys-154, Cys-156-Cys-169, Cys-177-Cys-316, and Cys-235-Cys-251. The region spanning 210 to 447 (IDGKLTRRGD…YLDWIHSHIE (238 aa)) is the Peptidase S1 domain. The active-site Charge relay system is the His-250. A glycan (N-linked (GlcNAc...) asparagine) is linked at Asn-287. Residue Asp-296 is the Charge relay system of the active site. Asn-352 carries an N-linked (GlcNAc...) asparagine glycan. 2 cysteine pairs are disulfide-bonded: Cys-370–Cys-384 and Cys-395–Cys-423. The Charge relay system role is filled by Ser-399.

The protein belongs to the peptidase S1 family. In terms of assembly, synthesized as a single chain precursor, which is cleaved into a light chain and a heavy chain held together by a disulfide bond. The enzyme is then activated by thrombin, which cleaves a tetradecapeptide from the amino end of the heavy chain; this reaction, which occurs at the surface of endothelial cells, is strongly promoted by thrombomodulin. The vitamin K-dependent, enzymatic carboxylation of some Glu residues allows the modified protein to bind calcium. In terms of processing, the iron and 2-oxoglutarate dependent 3-hydroxylation of aspartate and asparagine is (R) stereospecific within EGF domains. In terms of tissue distribution, plasma; synthesized in the liver.

The protein resides in the secreted. It localises to the golgi apparatus. Its subcellular location is the endoplasmic reticulum. The catalysed reaction is Degradation of blood coagulation factors Va and VIIIa.. In terms of biological role, protein C is a vitamin K-dependent serine protease that regulates blood coagulation by inactivating factors Va and VIIIa in the presence of calcium ions and phospholipids. Exerts a protective effect on the endothelial cell barrier function. The polypeptide is Vitamin K-dependent protein C (PROC) (Oryctolagus cuniculus (Rabbit)).